The sequence spans 412 residues: Peptidase T (412 aa).

A Zn(2+)-binding site is contributed by His-78. Asp-80 is a catalytic residue. Asp-140 is a Zn(2+) binding site. Glu-174 serves as the catalytic Proton acceptor. Zn(2+) contacts are provided by Glu-175, Asp-197, and His-379.

It belongs to the peptidase M20B family. Requires Zn(2+) as cofactor.

It localises to the cytoplasm. The enzyme catalyses Release of the N-terminal residue from a tripeptide.. Cleaves the N-terminal amino acid of tripeptides. The protein is Peptidase T of Staphylococcus epidermidis (strain ATCC 12228 / FDA PCI 1200).